Consider the following 256-residue polypeptide: UPF0246 protein HRM2_41860 (256 aa).

Belongs to the UPF0246 family.

The polypeptide is UPF0246 protein HRM2_41860 (Desulforapulum autotrophicum (strain ATCC 43914 / DSM 3382 / VKM B-1955 / HRM2) (Desulfobacterium autotrophicum)).